Reading from the N-terminus, the 291-residue chain is 33 kDa chaperonin (291 aa).

2 disulfide bridges follow: Cys235-Cys237 and Cys268-Cys271.

It belongs to the HSP33 family. In terms of processing, under oxidizing conditions two disulfide bonds are formed involving the reactive cysteines. Under reducing conditions zinc is bound to the reactive cysteines and the protein is inactive.

It localises to the cytoplasm. Redox regulated molecular chaperone. Protects both thermally unfolding and oxidatively damaged proteins from irreversible aggregation. Plays an important role in the bacterial defense system toward oxidative stress. The polypeptide is 33 kDa chaperonin (Bacillus subtilis (strain 168)).